We begin with the raw amino-acid sequence, 124 residues long: Ribonuclease pancreatic (124 aa).

Residues 1-13 show a composition bias toward basic and acidic residues; sequence KESAAAKFERQHM. Positions 1–24 are disordered; the sequence is KESAAAKFERQHMDSSTSSASSSN. Positions 7 and 10 each coordinate substrate. H12 (proton acceptor) is an active-site residue. Intrachain disulfides connect C26–C84, C40–C95, C58–C110, and C65–C72. N34 is a glycosylation site (N-linked (GlcNAc...) asparagine; partial). Residues 41-45, K66, and R85 each bind substrate; that span reads KPVNT. The Proton donor role is filled by H119.

Belongs to the pancreatic ribonuclease family. In terms of assembly, monomer. Interacts with and forms tight 1:1 complexes with RNH1. Dimerization of two such complexes may occur. Interaction with RNH1 inhibits this protein. Pancreas.

Its subcellular location is the secreted. The catalysed reaction is an [RNA] containing cytidine + H2O = an [RNA]-3'-cytidine-3'-phosphate + a 5'-hydroxy-ribonucleotide-3'-[RNA].. The enzyme catalyses an [RNA] containing uridine + H2O = an [RNA]-3'-uridine-3'-phosphate + a 5'-hydroxy-ribonucleotide-3'-[RNA].. In terms of biological role, endonuclease that catalyzes the cleavage of RNA on the 3' side of pyrimidine nucleotides. Acts on single-stranded and double-stranded RNA. The chain is Ribonuclease pancreatic (RNASE1) from Aepyceros melampus (Impala).